Consider the following 1302-residue polypeptide: Cingulin-like protein 1 (1302 aa).

Positions methionine 1–threonine 554 are head. Residues alanine 37 to glycine 51 carry the ZIM motif. The segment at proline 75 to proline 104 is disordered. Serine 112 and serine 202 each carry phosphoserine. 3 disordered regions span residues lysine 186–alanine 209, phenylalanine 251–serine 305, and proline 364–alanine 392. The segment covering proline 195 to serine 204 has biased composition (polar residues). Basic and acidic residues predominate over residues alanine 264–aspartate 282. Phosphoserine is present on residues serine 283, serine 297, and serine 298. Over residues serine 296–serine 305 the composition is skewed to low complexity. Positions leucine 366–arginine 377 are enriched in basic residues. Residues isoleucine 378–serine 388 are compositionally biased toward basic and acidic residues. A phosphoserine mark is found at serine 388, serine 391, and serine 486. Positions asparagine 604–arginine 1258 form a coiled coil. The segment covering arginine 655–glutamate 664 has biased composition (basic and acidic residues). Residues arginine 655 to serine 675 form a disordered region. The residue at position 708 (serine 708) is a Phosphoserine. Disordered regions lie at residues alanine 903–lysine 929 and proline 1263–proline 1287. The span at glutamine 917 to lysine 929 shows a compositional bias: basic and acidic residues. The tract at residues proline 1263 to isoleucine 1302 is tail.

Belongs to the cingulin family. Homodimer or oligomer. Interacts with CD2AP and SH3BP1; probably part of a complex at cell junctions. Smooth muscle, spleen, testis, fetal brain, amygdala, corpus callosum, cerebellum, thalamus and subthalamic nucleus of adult brain.

It is found in the cell junction. Its subcellular location is the tight junction. Its function is as follows. May be involved in anchoring the apical junctional complex, especially tight junctions, to actin-based cytoskeletons. The chain is Cingulin-like protein 1 (CGNL1) from Homo sapiens (Human).